The chain runs to 300 residues: 4-hydroxy-tetrahydrodipicolinate synthase (300 aa).

Thr-54 is a binding site for pyruvate. Tyr-142 (proton donor/acceptor) is an active-site residue. Lys-170 serves as the catalytic Schiff-base intermediate with substrate. Position 212 (Ile-212) interacts with pyruvate.

The protein belongs to the DapA family. In terms of assembly, homotetramer; dimer of dimers.

The protein resides in the cytoplasm. It carries out the reaction L-aspartate 4-semialdehyde + pyruvate = (2S,4S)-4-hydroxy-2,3,4,5-tetrahydrodipicolinate + H2O + H(+). It functions in the pathway amino-acid biosynthesis; L-lysine biosynthesis via DAP pathway; (S)-tetrahydrodipicolinate from L-aspartate: step 3/4. Its function is as follows. Catalyzes the condensation of (S)-aspartate-beta-semialdehyde [(S)-ASA] and pyruvate to 4-hydroxy-tetrahydrodipicolinate (HTPA). The sequence is that of 4-hydroxy-tetrahydrodipicolinate synthase from Halorhodospira halophila (strain DSM 244 / SL1) (Ectothiorhodospira halophila (strain DSM 244 / SL1)).